Here is a 74-residue protein sequence, read N- to C-terminus: Putative membrane protein insertion efficiency factor (74 aa).

The protein belongs to the UPF0161 family.

The protein resides in the cell inner membrane. In terms of biological role, could be involved in insertion of integral membrane proteins into the membrane. The chain is Putative membrane protein insertion efficiency factor from Endomicrobium trichonymphae.